A 288-amino-acid chain; its full sequence is MKKTIGFIGLGVMGKSMASHILNDGHPVLVYTRTKEKAESILQKGAIWKDTVKDLSKEADVIITMVGYPSDVEEVYFGSNGIIENAKEGAYLIDMTTSKPSLAKKIAEAAKEKALFALDAPVSGGDIGAQNGTLAIMVGGEKEAFEACMPIFSLMGENIQYQGPAGSGQHTKMCNQIAIAAGMIGVAEAMAYAQKSGLEPENVLKSITTGAAGSWSLSNLAPRMLQGNFEPGFYVKHFIKDMGIALEEAELMGEEMPGLSLAKSLYDKLAAQGEENSGTQSIYKLWVK.

Residues 6 to 20 and Thr-97 contribute to the NAD(+) site; that span reads GFIG…MASH. Lys-172 is a catalytic residue. Lys-240 lines the NAD(+) pocket.

Belongs to the HIBADH-related family.

The protein resides in the cell membrane. It is found in the membrane raft. This is an uncharacterized protein from Bacillus subtilis (strain 168).